The following is a 176-amino-acid chain: Large ribosomal subunit protein uL10 (176 aa).

Belongs to the universal ribosomal protein uL10 family. In terms of assembly, part of the ribosomal stalk of the 50S ribosomal subunit. The N-terminus interacts with L11 and the large rRNA to form the base of the stalk. The C-terminus forms an elongated spine to which L12 dimers bind in a sequential fashion forming a multimeric L10(L12)X complex.

In terms of biological role, forms part of the ribosomal stalk, playing a central role in the interaction of the ribosome with GTP-bound translation factors. The polypeptide is Large ribosomal subunit protein uL10 (Teredinibacter turnerae (strain ATCC 39867 / T7901)).